Reading from the N-terminus, the 985-residue chain is MKILTYNQLQEAFRDYAPRDFAVSRDDAFRVMRIYYNEGGGNLVAFCNAQLGGRLAQFYFVMKMDLYSYKPCHNSHIFATCRNRCSSYNTFVAPGVKNVYMDKINVIKFKRNGSSFGEKTMALDKFLHNANRVHMQTPVIEGTYLRFRRAQRCRNNCVADDARPFALERFSDDFEVLDPSTLTTNIAPVMACYDIETHSDGHNSSKPECDVIMCIGLAVFKNDRFEKVCFVYHSEAVEIPQASDDTYVVVFNNENHMITAFFEFLKTVNPDVILDYNGDVFDLPYIRGRLKGDKPLLRRYDLPAMQPNTKLFITKIGNRTDTYYFNYYIHIDLYKYFGVDANKRDVENFQLNTLSQYYLGDAKVDLNWQTMVEMYNNKQLGTIIKYNVQDCLLPIRLFNKLKLTDFMYSQCIMYRLCTDDFICNISHLISSTFFHLALTNTRADPATGLTVSDPYFFNKDDLGLMSSKGSAGLTTGMSRLRRRRIPLKDVPATAIRLGAIDENVKYEGGKVLQPRAGVYEFAFSLDFNSLYLTIMIDICACLTNLILCEDGNVYLNQDKQAINVQLLLQLLKQRSELKKCRDSQTESEFLYDLYDQMQNLSKRTANSIYGYYGIFCKLLANHITRVGREKLTAAIGTVEGLSNDPDLLREFGLSTLTFKVLYGDTDSTFVLPVFRREEIPEEGRMATLGRICAAVEARVNGLFTNGYKMAFENLMSVLILLKKKKYCYINNNNKIVFKGWLVKKDMPVFMRVAFRAAIEQVLRHQDLSKCLDSLKANMLMYLDAFGITKPLTDYSFSMTYNDGAGKTAADDDEAAPPKRRVITVARHCREILVNKATDFVPGNGDRIPYVLLDMQGNVTQKAYPLRLFDAQTMRISWLKHMTILNTFMNELLEIFGDEHKDALAECYSAILEKYMQHQAYDKKRAALVKIATKRKAPSASDASGKRARKGAAPSDDESGSSEDEDAPCEPKCANNTFKFCLYKAQ.

Residues 936–972 form a disordered region; the sequence is APSASDASGKRARKGAAPSDDESGSSEDEDAPCEPKC. Over residues 954-967 the composition is skewed to acidic residues; sequence SDDESGSSEDEDAP.

It belongs to the DNA polymerase type-B family.

The enzyme catalyses DNA(n) + a 2'-deoxyribonucleoside 5'-triphosphate = DNA(n+1) + diphosphate. Functionally, replicates the viral genome, host DNA polymerases cannot substitute for the viral enzyme in this process. In Orgyia pseudotsugata (Douglas-fir tussock moth), this protein is DNA polymerase (POL).